Consider the following 576-residue polypeptide: Protein HYPER-SENSITIVITY-RELATED 4 (576 aa).

A helical membrane pass occupies residues 55–75 (LATAKTVLTTAASVAATAMLA). ATP is bound at residue 306 to 313 (GPPGTGKS). The disordered stretch occupies residues 508-532 (DKAKTEKQELENKKKTKEGTDSVVK).

The protein belongs to the AAA ATPase family. BCS1 subfamily. In terms of assembly, binds to the Yariv phenylglycoside (beta-D-Glc)(3). The cofactor is Mg(2+).

It is found in the membrane. The catalysed reaction is ATP + H2O = ADP + phosphate + H(+). The sequence is that of Protein HYPER-SENSITIVITY-RELATED 4 from Arabidopsis thaliana (Mouse-ear cress).